A 695-amino-acid chain; its full sequence is Elongation factor G (695 aa).

One can recognise a tr-type G domain in the interval 4–279 (EKVRNIGISA…AVTQYLPSPL (276 aa)). Residues 13-20 (AHIDSGKT), 79-83 (DTPGH), and 133-136 (NKMD) each bind GTP.

The protein belongs to the TRAFAC class translation factor GTPase superfamily. Classic translation factor GTPase family. EF-G/EF-2 subfamily.

It localises to the cytoplasm. In terms of biological role, catalyzes the GTP-dependent ribosomal translocation step during translation elongation. During this step, the ribosome changes from the pre-translocational (PRE) to the post-translocational (POST) state as the newly formed A-site-bound peptidyl-tRNA and P-site-bound deacylated tRNA move to the P and E sites, respectively. Catalyzes the coordinated movement of the two tRNA molecules, the mRNA and conformational changes in the ribosome. This is Elongation factor G from Rhodopirellula baltica (strain DSM 10527 / NCIMB 13988 / SH1).